Consider the following 96-residue polypeptide: Plasminogen-like protein B (96 aa).

An N-terminal signal peptide occupies residues 1–19 (MEHKEVVLLLLLFLKSGQG). The region spanning 20-96 (EPLDDYVNTQ…RMRDAVLFEK (77 aa)) is the PAN domain. Cystine bridges form between Cys49-Cys73 and Cys53-Cys61.

Its subcellular location is the secreted. May bind noncovalently to lysine binding sites present in the kringle structures of plasminogen. This may interfere with the binding of fibrin or alpha-2-antiplasmin to plasminogen and may result in the localization of activity at sites necessary for extracellular matrix destruction. In Homo sapiens (Human), this protein is Plasminogen-like protein B (PLGLB1).